A 326-amino-acid chain; its full sequence is MSNISVIGTGSYVPNDIITNDFLSTIVDTSDEWIRTRTGILERRISKEENTIYMATESAKEAIKNANIDANDLDLIIVATLTPDNFMPSTACSVQKEIGAINALCFDISAACSGFIYGLEIACSMLKNSFRNKALIIGAENLSKIVDWEDRNTCVLFGDGAGAAILSKTKEEGILEFHSGSNGLKGEHLTCGVLKANNTSNKNDRLEKNNFIKMNGKEIFRFAVGAMNETICNIQEKTKWDLNEVKYIISHQANSRIIEYTAKKLNTEKDKFYMNLDKYGNTSAASIPIALDEMNKRGLLNKQDKIILVGFGGGLTFGGAAIVWSI.

Catalysis depends on residues C112 and H251. The tract at residues 252–256 is ACP-binding; it reads QANSR. The active site involves N281.

Belongs to the thiolase-like superfamily. FabH family. As to quaternary structure, homodimer.

It localises to the cytoplasm. The enzyme catalyses malonyl-[ACP] + acetyl-CoA + H(+) = 3-oxobutanoyl-[ACP] + CO2 + CoA. Its pathway is lipid metabolism; fatty acid biosynthesis. Functionally, catalyzes the condensation reaction of fatty acid synthesis by the addition to an acyl acceptor of two carbons from malonyl-ACP. Catalyzes the first condensation reaction which initiates fatty acid synthesis and may therefore play a role in governing the total rate of fatty acid production. Possesses both acetoacetyl-ACP synthase and acetyl transacylase activities. Its substrate specificity determines the biosynthesis of branched-chain and/or straight-chain of fatty acids. The sequence is that of Beta-ketoacyl-[acyl-carrier-protein] synthase III from Clostridium botulinum (strain Loch Maree / Type A3).